The primary structure comprises 287 residues: Diphthine methyl ester synthase (287 aa).

S-adenosyl-L-methionine-binding positions include L9, D84, G87, 112-113 (SI), L163, V221, and H248.

The protein belongs to the diphthine synthase family.

Its subcellular location is the cytoplasm. It carries out the reaction 2-[(3S)-amino-3-carboxypropyl]-L-histidyl-[translation elongation factor 2] + 4 S-adenosyl-L-methionine = diphthine methyl ester-[translation elongation factor 2] + 4 S-adenosyl-L-homocysteine + 3 H(+). Its pathway is protein modification; peptidyl-diphthamide biosynthesis. In terms of biological role, S-adenosyl-L-methionine-dependent methyltransferase that catalyzes four methylations of the modified target histidine residue in translation elongation factor 2 (EF-2), to form an intermediate called diphthine methyl ester. The four successive methylation reactions represent the second step of diphthamide biosynthesis. The polypeptide is Diphthine methyl ester synthase (dph-5) (Neurospora crassa (strain ATCC 24698 / 74-OR23-1A / CBS 708.71 / DSM 1257 / FGSC 987)).